Here is an 868-residue protein sequence, read N- to C-terminus: MALTPMMQQYLDIKKQHPNTILFFRLGDFYEMFFEDAKLASQELEITLTGRDAGEPERVPMCGVPFHAADSYISKLIEKGYKVAICEQVEDPKVTKGIVKREVIRVITPGTLMDGSMLSEKDNNYLVAISQTSSNNCGMAVADLSTGLFQVTEMEGHWSLESLLDEILRLTPREVLLTPDLKKHEKTVQAFNFLPSTVFTTLEETQQVSDYIELLNNQFGQKVSAVYKDRPAVCMAAGILLQYLINTQKRQLNHITEITAYSPRAYMMLDGIARRNLEISKSLRDGDKRGTLLWVLDATKTAMGGRMLKNWLEQPLIDTLKIQERLDAVEELVNSILLREEISGALKQIYDLERLAARAAYGSANGRDMIALRGSLEKLPFIHDALAAVSSTRLKRIYTEFNTLSDLRKVLDLALAENPPVSLRDGGLIKDGFDQEVDQLRNAARDGKTWLAGLEAREKENTGIKNLKVGFNKVFGYYLEVTRANLSMVPEYYQRRQTLANAERFITPELKEYESMILGAEDRLVELEYNLFVAIRAKVAAEVSSIQKTAALLSEIDALVSLAEVAVRNGFVRPEVTDNGIIEIKDGRHPVVENTQGLGGFVPNDTYLDIKEERLCLITGPNMGGKSTYQRQVALIVLMAQVGSFVPAQRARIGIVDRIFARVGASDDLTSGQSTFMVEMYETKQIIDHATAKSLVIIDELGRGTSNLEGMAIAQSVIEFLHDEVGCRTLFSTHYHELAELEGLLRGLKNYATAVKEQGDEVVFLRKVVRSKASKSYGVHCARLAGLPTSIIRRASELVMQLEFHQRAAQEVVAGKTQIAAASEQLAMFTPQEDQVKEEILALNLTNMTPLESLNFLDNLQKRLREMQ.

Residue 620 to 627 (GPNMGGKS) coordinates ATP.

It belongs to the DNA mismatch repair MutS family.

In terms of biological role, this protein is involved in the repair of mismatches in DNA. It is possible that it carries out the mismatch recognition step. This protein has a weak ATPase activity. The sequence is that of DNA mismatch repair protein MutS from Desulforamulus reducens (strain ATCC BAA-1160 / DSM 100696 / MI-1) (Desulfotomaculum reducens).